A 337-amino-acid polypeptide reads, in one-letter code: DNA-directed RNA polymerase subunit alpha (337 aa).

An alpha N-terminal domain (alpha-NTD) region spans residues 1-233 (MIQKNWQELI…DQLAIFVNFE (233 aa)). The interval 249–337 (FNPALLKKVD…DLAKRYEDQY (89 aa)) is alpha C-terminal domain (alpha-CTD).

This sequence belongs to the RNA polymerase alpha chain family. In terms of assembly, homodimer. The RNAP catalytic core consists of 2 alpha, 1 beta, 1 beta' and 1 omega subunit. When a sigma factor is associated with the core the holoenzyme is formed, which can initiate transcription.

It carries out the reaction RNA(n) + a ribonucleoside 5'-triphosphate = RNA(n+1) + diphosphate. DNA-dependent RNA polymerase catalyzes the transcription of DNA into RNA using the four ribonucleoside triphosphates as substrates. This Brucella anthropi (strain ATCC 49188 / DSM 6882 / CCUG 24695 / JCM 21032 / LMG 3331 / NBRC 15819 / NCTC 12168 / Alc 37) (Ochrobactrum anthropi) protein is DNA-directed RNA polymerase subunit alpha.